A 463-amino-acid polypeptide reads, in one-letter code: Chaperone SurA (463 aa).

Residues 1 to 25 form the signal peptide; the sequence is MTKPFSVVLASLLAITSTISPLASA. 2 consecutive PpiC domains span residues 174-276 and 289-388; these read GSKY…KLME and VTEY…QRVG. 2 disordered regions span residues 329-348 and 434-463; these read ATAK…GDLG and GDRA…KPTR. A compositionally biased stretch (low complexity) spans 439 to 452; it reads NNATAAPAKSADPA. Positions 453–463 are enriched in pro residues; that stretch reads LPAPPPAKPTR.

The protein resides in the periplasm. It carries out the reaction [protein]-peptidylproline (omega=180) = [protein]-peptidylproline (omega=0). Its function is as follows. Chaperone involved in the correct folding and assembly of outer membrane proteins. Recognizes specific patterns of aromatic residues and the orientation of their side chains, which are found more frequently in integral outer membrane proteins. May act in both early periplasmic and late outer membrane-associated steps of protein maturation. The sequence is that of Chaperone SurA from Xanthomonas oryzae pv. oryzae (strain MAFF 311018).